A 907-amino-acid chain; its full sequence is Nuclear receptor coactivator 7 (907 aa).

Basic and acidic residues predominate over residues 1–12 (METKEEKKERRQ). Residues 1–29 (METKEEKKERRQGYFARLKKKRQAKQNTE) are a coiled coil. Disordered stretches follow at residues 1–51 (METK…DDES), 63–83 (DNCK…RKKK), and 99–121 (YSTD…SQKP). The segment covering 25–41 (KQNTETVSANSPGSPVS) has biased composition (polar residues). Basic and acidic residues-rich tracts occupy residues 68–78 (AGEKETVPEKE) and 99–116 (YSTD…EKKM). A LysM domain is found at 125 to 168 (IEYTAGNQDTINSIALKFNITPNKLVELNKLFTHTIVPGQILFV). 2 disordered regions span residues 335 to 373 (LSKE…QSSE) and 401 to 443 (DPHV…MDRG). The segment covering 401-422 (DPHVKEPSEEKNVSDIRTKEDS) has biased composition (basic and acidic residues). The TLDc domain maps to 746-907 (ALLENMHIEQ…IQDVEVWTFE (162 aa)).

The protein belongs to the OXR1 family.

The protein localises to the nucleus. Functionally, enhances the transcriptional activities of several nuclear receptors. The chain is Nuclear receptor coactivator 7 (NCOA7) from Gallus gallus (Chicken).